Consider the following 202-residue polypeptide: Peptidyl-tRNA hydrolase (202 aa).

Tyr14 contacts tRNA. The active-site Proton acceptor is the His19. Positions 64, 66, and 112 each coordinate tRNA.

The protein belongs to the PTH family. In terms of assembly, monomer.

The protein localises to the cytoplasm. It carries out the reaction an N-acyl-L-alpha-aminoacyl-tRNA + H2O = an N-acyl-L-amino acid + a tRNA + H(+). In terms of biological role, hydrolyzes ribosome-free peptidyl-tRNAs (with 1 or more amino acids incorporated), which drop off the ribosome during protein synthesis, or as a result of ribosome stalling. Its function is as follows. Catalyzes the release of premature peptidyl moieties from peptidyl-tRNA molecules trapped in stalled 50S ribosomal subunits, and thus maintains levels of free tRNAs and 50S ribosomes. In Xanthobacter autotrophicus (strain ATCC BAA-1158 / Py2), this protein is Peptidyl-tRNA hydrolase.